The sequence spans 51 residues: Large ribosomal subunit protein eL39 (51 aa).

This sequence belongs to the eukaryotic ribosomal protein eL39 family.

This is Large ribosomal subunit protein eL39 from Staphylothermus marinus (strain ATCC 43588 / DSM 3639 / JCM 9404 / F1).